A 191-amino-acid polypeptide reads, in one-letter code: Transmembrane protein 17B (191 aa).

Helical transmembrane passes span 50–70 (MSLY…VVML), 83–103 (FILI…LYLG), 115–135 (LAGF…FQLF), and 147–167 (GVHI…FVAL).

This sequence belongs to the TMEM17 family. As to quaternary structure, part of the tectonic-like complex (also named B9 complex).

It is found in the cell projection. Its subcellular location is the cilium membrane. Functionally, transmembrane component of the tectonic-like complex, a complex localized at the transition zone of primary cilia and acting as a barrier that prevents diffusion of transmembrane proteins between the cilia and plasma membranes. Required for ciliogenesis and sonic hedgehog/SHH signaling. This chain is Transmembrane protein 17B (Tmem17b), found in Danio rerio (Zebrafish).